A 305-amino-acid polypeptide reads, in one-letter code: tRNA pseudouridine synthase B (305 aa).

The Nucleophile role is filled by Asp41.

Belongs to the pseudouridine synthase TruB family. Type 1 subfamily.

It catalyses the reaction uridine(55) in tRNA = pseudouridine(55) in tRNA. In terms of biological role, responsible for synthesis of pseudouridine from uracil-55 in the psi GC loop of transfer RNAs. The polypeptide is tRNA pseudouridine synthase B (Prochlorococcus marinus (strain MIT 9301)).